Consider the following 622-residue polypeptide: Palmitoyl-protein thioesterase-dolichyl pyrophosphate phosphatase fusion 1 (622 aa).

The N-terminal stretch at 1-24 (MLSCSSFLIFFLFSWVLLPMKSFA) is a signal peptide. Topologically, residues 25 to 405 (IPIISLDKVR…NVSEEKGPKS (381 aa)) are lumenal. Cysteines 106 and 138 form a disulfide. Ser125 is a catalytic residue. Residue Asn223 is glycosylated (N-linked (GlcNAc...) asparagine). Asp245 is a catalytic residue. Asn260 carries N-linked (GlcNAc...) asparagine glycosylation. His298 is an active-site residue. Asn396 carries an N-linked (GlcNAc...) asparagine glycan. A helical transmembrane segment spans residues 406–426 (FANLAFITIFSHFFYHIDDMW). Over 427 to 428 (RS) the chain is Cytoplasmic. The helical transmembrane segment at 429–449 (TLGLFSLIPQIIGIIYLTVMF) threads the bilayer. At 450–488 (TGRELDTFMQFGGQVVNEFINYVVKVSLKYPRPADIEYG) the chain is on the lumenal side. A helical transmembrane segment spans residues 489-511 (VGYGMPSSHSQFMGFFSAYMIAW). Over 512–519 (DYKYRRSQ) the chain is Cytoplasmic. Residues 520–540 (CFSMLSFAKYAIYLTLSTFVC) traverse the membrane as a helical segment. Over 541–552 (SSRYLLDFHYLT) the chain is Lumenal. Residues 553 to 573 (QVVYGYMIGFGVGLFWVYLVG) form a helical membrane-spanning segment. Topologically, residues 574–622 (KLRSLGVTKWLLSLPPLQFFYIKDTIPHSKDNHKRQWLESKQFKNQKSN) are cytoplasmic.

The protein in the N-terminal section; belongs to the palmitoyl-protein thioesterase family. This sequence in the C-terminal section; belongs to the dolichyldiphosphatase family. Proteolytically cleaved, possibly by krp1.

It localises to the vacuole. Its subcellular location is the endoplasmic reticulum membrane. The enzyme catalyses S-hexadecanoyl-L-cysteinyl-[protein] + H2O = L-cysteinyl-[protein] + hexadecanoate + H(+). It catalyses the reaction a di-trans,poly-cis-dolichyl diphosphate + H2O = a di-trans,poly-cis-dolichyl phosphate + phosphate + H(+). Functionally, essential protein. Removes thioester-linked fatty acyl groups such as palmitate from modified cysteine residues in proteins or peptides during vacuolar degradation. Required for efficient N-glycosylation. Necessary for maintaining optimal levels of dolichol-linked oligosaccharides. In Schizosaccharomyces pombe (strain 972 / ATCC 24843) (Fission yeast), this protein is Palmitoyl-protein thioesterase-dolichyl pyrophosphate phosphatase fusion 1 (pdf1).